Consider the following 208-residue polypeptide: Platelet glycoprotein Ib beta chain (208 aa).

Residues 1 to 26 (MGSGPRGAVSLLLLMLAPPSCPAADC) form the signal peptide. Intrachain disulfides connect C26–C32 and C30–C39. In terms of domain architecture, LRRNT spans 27 to 55 (PAPCSCAGTLVDCGRRGLTWASLPTSFPV). Residues 27-147 (PAPCSCAGTL…RAACAPGPLC (121 aa)) are Extracellular-facing. The stretch at 60–83 (LVLTGNNLTALPSGLLDALPAVRT) is one LRR repeat. N66 carries an N-linked (GlcNAc...) asparagine glycan. In terms of domain architecture, LRRCT spans 89-143 (NPWRCDCRLVPLRAWLAGRPERAPYRDLRCVAPPAVRGRLLPYLAEDDVRAACAP). Disulfide bonds link C93–C118 and C95–C141. The helical transmembrane segment at 148–172 (WGALAAELALLGLGLLHALLLVLLL) threads the bilayer. Over 173-208 (CRLRRLRARARARARAALRLSLTDPLVAEQDGTDES) the chain is Cytoplasmic. S193 bears the Phosphoserine; by PKA mark. T195 carries the phosphothreonine modification.

Two GP-Ib beta are disulfide-linked to one GP-Ib alpha. GP-IX is complexed with the GP-Ib heterodimer via a non covalent linkage. Interacts with TRAF4.

Its subcellular location is the membrane. Its function is as follows. Gp-Ib, a surface membrane protein of platelets, participates in the formation of platelet plugs by binding to von Willebrand factor, which is already bound to the subendothelium. This is Platelet glycoprotein Ib beta chain (GP1BB) from Papio cynocephalus (Yellow baboon).